The primary structure comprises 237 residues: Uridylate kinase (237 aa).

11 to 14 (KLSG) lines the ATP pocket. Residue Gly-53 coordinates UMP. ATP is bound by residues Gly-54 and Arg-58. Residues Asp-73 and 134–141 (TGNPFFTT) contribute to the UMP site. Residues Thr-161, Tyr-167, and Asp-170 each coordinate ATP.

This sequence belongs to the UMP kinase family. In terms of assembly, homohexamer.

Its subcellular location is the cytoplasm. It carries out the reaction UMP + ATP = UDP + ADP. Its pathway is pyrimidine metabolism; CTP biosynthesis via de novo pathway; UDP from UMP (UMPK route): step 1/1. Inhibited by UTP. Its function is as follows. Catalyzes the reversible phosphorylation of UMP to UDP. This chain is Uridylate kinase, found in Burkholderia vietnamiensis (strain G4 / LMG 22486) (Burkholderia cepacia (strain R1808)).